We begin with the raw amino-acid sequence, 247 residues long: Virulence plasmid protein pGP6-D (247 aa).

This sequence belongs to the UPF0137 (pGP6-D) family.

This is Virulence plasmid protein pGP6-D from Chlamydia trachomatis.